The chain runs to 172 residues: Trypsin inhibitor 1A (172 aa).

2 disulfides stabilise this stretch: cysteine 40–cysteine 84 and cysteine 133–cysteine 139.

Belongs to the protease inhibitor I3 (leguminous Kunitz-type inhibitor) family.

Functionally, WTI-1B inhibits trypsin stoichiometrically. This is Trypsin inhibitor 1A from Psophocarpus tetragonolobus (Winged bean).